We begin with the raw amino-acid sequence, 495 residues long: Adenosylhomocysteinase (495 aa).

Positions 71, 156, and 218 each coordinate substrate. Position 219 to 221 (219 to 221 (TTT)) interacts with NAD(+). Substrate-binding residues include K248 and D252. NAD(+)-binding positions include N253, 282 to 287 (GYGDVG), E305, N340, 361 to 363 (IGH), and N409.

Belongs to the adenosylhomocysteinase family. Requires NAD(+) as cofactor.

It localises to the cytoplasm. The catalysed reaction is S-adenosyl-L-homocysteine + H2O = L-homocysteine + adenosine. Its pathway is amino-acid biosynthesis; L-homocysteine biosynthesis; L-homocysteine from S-adenosyl-L-homocysteine: step 1/1. Functionally, may play a key role in the regulation of the intracellular concentration of adenosylhomocysteine. In Mycobacterium bovis (strain ATCC BAA-935 / AF2122/97), this protein is Adenosylhomocysteinase.